A 967-amino-acid chain; its full sequence is Kinesin heavy chain (967 aa).

Positions Asn8–Ile326 constitute a Kinesin motor domain. Gly85 to Thr92 contributes to the ATP binding site. The interval Val173–Lys314 is microtubule-binding. 2 disordered regions span residues Val387–Asp411 and Lys923–Ala967. The stretch at Pro392–Leu861 forms a coiled coil. Residues Pro862–Ala967 are globular. A compositionally biased stretch (polar residues) spans Gln949–Pro958.

The protein belongs to the TRAFAC class myosin-kinesin ATPase superfamily. Kinesin family. Kinesin subfamily. In terms of assembly, oligomer composed of two heavy chains and two light chains. Interacts with amyloid-beta precursor-like protein (via cytoplasmic domain).

It localises to the cytoplasm. Its subcellular location is the cytoskeleton. The protein resides in the cell projection. The protein localises to the axon. In terms of biological role, kinesin is a microtubule-associated force-producing protein that may play a role in organelle transport. The protein is Kinesin heavy chain of Doryteuthis pealeii (Longfin inshore squid).